We begin with the raw amino-acid sequence, 728 residues long: Catalase-peroxidase (728 aa).

The first 19 residues, 1–19 (MSTEAKCPVTGGATRSSSA), serve as a signal peptide directing secretion. Positions 1 to 20 (MSTEAKCPVTGGATRSSSAG) are disordered. The segment at residues 96–219 (WHAAGTYRIG…LAAVQMGLIY (124 aa)) is a cross-link (tryptophyl-tyrosyl-methioninium (Trp-Tyr) (with M-245)). H97 functions as the Proton acceptor in the catalytic mechanism. The segment at residues 219–245 (YVNPEGPNGKPDPVAAARDIRETFARM) is a cross-link (tryptophyl-tyrosyl-methioninium (Tyr-Met) (with W-96)). H260 provides a ligand contact to heme b.

It belongs to the peroxidase family. Peroxidase/catalase subfamily. Homodimer or homotetramer. Heme b serves as cofactor. In terms of processing, formation of the three residue Trp-Tyr-Met cross-link is important for the catalase, but not the peroxidase activity of the enzyme.

The enzyme catalyses H2O2 + AH2 = A + 2 H2O. The catalysed reaction is 2 H2O2 = O2 + 2 H2O. Functionally, bifunctional enzyme with both catalase and broad-spectrum peroxidase activity. The protein is Catalase-peroxidase of Acidiphilium cryptum (strain JF-5).